The chain runs to 351 residues: Apolipoprotein L4 (351 aa).

Residues 1 to 21 (MEGAALLKIFVVCIWVQQNHP) form the signal peptide.

It belongs to the apolipoprotein L family. Widely expressed; the highest levels are in spinal cord, placenta, adrenal gland; also detected in spleen, bone marrow, uterus, trachea, mammary gland and testis; levels are low in brain, heart and pancreas.

It is found in the secreted. In terms of biological role, may play a role in lipid exchange and transport throughout the body. May participate in reverse cholesterol transport from peripheral cells to the liver. This chain is Apolipoprotein L4 (APOL4), found in Homo sapiens (Human).